The primary structure comprises 156 residues: ATP synthase subunit b (156 aa).

Residues 7–29 traverse the membrane as a helical segment; that stretch reads LFAQMVVFLVLAWFTMKFVWPPL.

It belongs to the ATPase B chain family. As to quaternary structure, F-type ATPases have 2 components, F(1) - the catalytic core - and F(0) - the membrane proton channel. F(1) has five subunits: alpha(3), beta(3), gamma(1), delta(1), epsilon(1). F(0) has three main subunits: a(1), b(2) and c(10-14). The alpha and beta chains form an alternating ring which encloses part of the gamma chain. F(1) is attached to F(0) by a central stalk formed by the gamma and epsilon chains, while a peripheral stalk is formed by the delta and b chains.

The protein resides in the cell inner membrane. Its function is as follows. F(1)F(0) ATP synthase produces ATP from ADP in the presence of a proton or sodium gradient. F-type ATPases consist of two structural domains, F(1) containing the extramembraneous catalytic core and F(0) containing the membrane proton channel, linked together by a central stalk and a peripheral stalk. During catalysis, ATP synthesis in the catalytic domain of F(1) is coupled via a rotary mechanism of the central stalk subunits to proton translocation. In terms of biological role, component of the F(0) channel, it forms part of the peripheral stalk, linking F(1) to F(0). This is ATP synthase subunit b from Burkholderia lata (strain ATCC 17760 / DSM 23089 / LMG 22485 / NCIMB 9086 / R18194 / 383).